The following is a 716-amino-acid chain: Fatty acid oxidation complex subunit alpha (716 aa).

The tract at residues 1–189 (MIYQSPTIQV…KVGAVDSVVA (189 aa)) is enoyl-CoA hydratase/isomerase. Residue Asp296 participates in substrate binding. The interval 311–716 (KEVNNAAVLG…AANNGSYYQA (406 aa)) is 3-hydroxyacyl-CoA dehydrogenase. Residues Met324, Asp343, 400–402 (VVE), Lys407, and Ser429 contribute to the NAD(+) site. His450 acts as the For 3-hydroxyacyl-CoA dehydrogenase activity in catalysis. Asn453 is a binding site for NAD(+). Positions 500 and 660 each coordinate substrate.

The protein in the N-terminal section; belongs to the enoyl-CoA hydratase/isomerase family. This sequence in the C-terminal section; belongs to the 3-hydroxyacyl-CoA dehydrogenase family. In terms of assembly, heterotetramer of two alpha chains (FadB) and two beta chains (FadA).

The enzyme catalyses a (3S)-3-hydroxyacyl-CoA + NAD(+) = a 3-oxoacyl-CoA + NADH + H(+). The catalysed reaction is a (3S)-3-hydroxyacyl-CoA = a (2E)-enoyl-CoA + H2O. It catalyses the reaction a 4-saturated-(3S)-3-hydroxyacyl-CoA = a (3E)-enoyl-CoA + H2O. It carries out the reaction (3S)-3-hydroxybutanoyl-CoA = (3R)-3-hydroxybutanoyl-CoA. The enzyme catalyses a (3Z)-enoyl-CoA = a 4-saturated (2E)-enoyl-CoA. The catalysed reaction is a (3E)-enoyl-CoA = a 4-saturated (2E)-enoyl-CoA. It functions in the pathway lipid metabolism; fatty acid beta-oxidation. Functionally, involved in the aerobic and anaerobic degradation of long-chain fatty acids via beta-oxidation cycle. Catalyzes the formation of 3-oxoacyl-CoA from enoyl-CoA via L-3-hydroxyacyl-CoA. It can also use D-3-hydroxyacyl-CoA and cis-3-enoyl-CoA as substrate. The protein is Fatty acid oxidation complex subunit alpha of Shewanella baltica (strain OS185).